The chain runs to 349 residues: Quinolinate synthase (349 aa).

Iminosuccinate is bound by residues His-52 and Ser-69. Cys-114 contacts [4Fe-4S] cluster. Residues 140–142 (YFN) and Ser-157 each bind iminosuccinate. A [4Fe-4S] cluster-binding site is contributed by Cys-201. Iminosuccinate contacts are provided by residues 227–229 (HPE) and Thr-255. Cys-300 lines the [4Fe-4S] cluster pocket.

Belongs to the quinolinate synthase family. Type 2 subfamily. [4Fe-4S] cluster is required as a cofactor.

It localises to the cytoplasm. It carries out the reaction iminosuccinate + dihydroxyacetone phosphate = quinolinate + phosphate + 2 H2O + H(+). The protein operates within cofactor biosynthesis; NAD(+) biosynthesis; quinolinate from iminoaspartate: step 1/1. Its function is as follows. Catalyzes the condensation of iminoaspartate with dihydroxyacetone phosphate to form quinolinate. The protein is Quinolinate synthase of Mycolicibacterium paratuberculosis (strain ATCC BAA-968 / K-10) (Mycobacterium paratuberculosis).